The sequence spans 339 residues: tRNA (cytidine(56)-2'-O)-methyltransferase (339 aa).

S-adenosyl-L-methionine-binding positions include Leu79 and 105 to 109; that span reads GSEKV. In terms of domain architecture, HD spans 188-295; that stretch reads LIEHVKAVEG…VAQADNLFAG (108 aa).

It belongs to the aTrm56 family. Homodimer.

The protein localises to the cytoplasm. The enzyme catalyses cytidine(56) in tRNA + S-adenosyl-L-methionine = 2'-O-methylcytidine(56) in tRNA + S-adenosyl-L-homocysteine + H(+). Specifically catalyzes the AdoMet-dependent 2'-O-ribose methylation of cytidine at position 56 in tRNAs. In Thermoplasma acidophilum (strain ATCC 25905 / DSM 1728 / JCM 9062 / NBRC 15155 / AMRC-C165), this protein is tRNA (cytidine(56)-2'-O)-methyltransferase.